A 319-amino-acid polypeptide reads, in one-letter code: HPr kinase/phosphorylase (319 aa).

Residues H141 and K162 contribute to the active site. 156-163 is an ATP binding site; the sequence is GNSGVGKS. S163 serves as a coordination point for Mg(2+). The active-site Proton acceptor; for phosphorylation activity. Proton donor; for dephosphorylation activity is D180. The interval 204–213 is important for the catalytic mechanism of both phosphorylation and dephosphorylation; sequence MEIRGIGIID. E205 provides a ligand contact to Mg(2+). The active site involves R246. Residues 267–272 are important for the catalytic mechanism of dephosphorylation; that stretch reads PVKVGR.

It belongs to the HPrK/P family. Homohexamer. The cofactor is Mg(2+).

The catalysed reaction is [HPr protein]-L-serine + ATP = [HPr protein]-O-phospho-L-serine + ADP + H(+). It carries out the reaction [HPr protein]-O-phospho-L-serine + phosphate + H(+) = [HPr protein]-L-serine + diphosphate. In terms of biological role, catalyzes the ATP- as well as the pyrophosphate-dependent phosphorylation of a specific serine residue in HPr, a phosphocarrier protein of the phosphoenolpyruvate-dependent sugar phosphotransferase system (PTS). HprK/P also catalyzes the pyrophosphate-producing, inorganic phosphate-dependent dephosphorylation (phosphorolysis) of seryl-phosphorylated HPr (P-Ser-HPr). The two antagonistic activities of HprK/P are regulated by several intracellular metabolites, which change their concentration in response to the absence or presence of rapidly metabolisable carbon sources (glucose, fructose, etc.) in the growth medium. Therefore, by controlling the phosphorylation state of HPr, HPrK/P is a sensor enzyme that plays a major role in the regulation of carbon metabolism and sugar transport: it mediates carbon catabolite repression (CCR), and regulates PTS-catalyzed carbohydrate uptake and inducer exclusion. In Lactobacillus gasseri (strain ATCC 33323 / DSM 20243 / BCRC 14619 / CIP 102991 / JCM 1131 / KCTC 3163 / NCIMB 11718 / NCTC 13722 / AM63), this protein is HPr kinase/phosphorylase.